The primary structure comprises 244 residues: Zinc import ATP-binding protein ZnuC 2 (244 aa).

The ABC transporter domain maps to 3–218; sequence IGCASLTIQL…PEYLALFGID (216 aa). 35–42 is an ATP binding site; that stretch reads GPNGSGKT.

The protein belongs to the ABC transporter superfamily. Zinc importer (TC 3.A.1.15.5) family. As to quaternary structure, the complex is composed of two ATP-binding proteins (ZnuC), two transmembrane proteins (ZnuB) and a solute-binding protein (ZnuA).

It is found in the cell inner membrane. It catalyses the reaction Zn(2+)(out) + ATP(in) + H2O(in) = Zn(2+)(in) + ADP(in) + phosphate(in) + H(+)(in). Functionally, part of the ABC transporter complex ZnuABC involved in zinc import. Responsible for energy coupling to the transport system. The polypeptide is Zinc import ATP-binding protein ZnuC 2 (Hahella chejuensis (strain KCTC 2396)).